The sequence spans 455 residues: MARIPRHRRLVLPLLCLLFQGATSLLFAIFVRYNHETDAALWHWGNHSNVDNEFYFRYPSFQDVHVMVFVGFGFLMVFLQRYGFSSVGFTFLVATFTLQWATLLQGFLHSFHGGHIHIGVESLINADFCAGAVLISFGAVLGKTGPAQLLLMALLEAVLFSVNEFILLSLLGVRDAGGSMTIHTFGAYFGLFLSRVLYRSQLEKSRHRQTSVYNSDLFAMIGTIFLWVFWPSFNSAPTALGDGQHRTVVNTYYSLTASTLSTFALSALVSGDGRLDMVHIQNAALAGGVVVGTASEMMLTPFGALAAGFLAGTVSTLGYKFFTPILESRFKLQDTCGVHNLHGMPGLLGAILGVLVAALATHEAYGDGLQTVFPLIAKGQRSATSQAMYQLFGMFVTLVFASVGGSLGGLLLKLPFLDSPPDSQCFEDQVYWEVPGEQEAETQRPLRTEEPDTQA.

Topologically, residues 1-10 (MARIPRHRRL) are cytoplasmic. A helical membrane pass occupies residues 11-31 (VLPLLCLLFQGATSLLFAIFV). At 32 to 58 (RYNHETDAALWHWGNHSNVDNEFYFRY) the chain is on the extracellular side. N-linked (GlcNAc...) asparagine glycosylation occurs at Asn46. The helical transmembrane segment at 59-79 (PSFQDVHVMVFVGFGFLMVFL) threads the bilayer. The Cytoplasmic segment spans residues 80-83 (QRYG). The chain crosses the membrane as a helical span at residues 84 to 104 (FSSVGFTFLVATFTLQWATLL). Over 105–121 (QGFLHSFHGGHIHIGVE) the chain is Extracellular. Residues 122–142 (SLINADFCAGAVLISFGAVLG) traverse the membrane as a helical segment. Residues 143–148 (KTGPAQ) are Cytoplasmic-facing. The chain crosses the membrane as a helical span at residues 149–169 (LLLMALLEAVLFSVNEFILLS). Residues 170–176 (LLGVRDA) lie on the Extracellular side of the membrane. Residues 177–197 (GGSMTIHTFGAYFGLFLSRVL) form a helical membrane-spanning segment. The Cytoplasmic portion of the chain corresponds to 198–216 (YRSQLEKSRHRQTSVYNSD). Residues 217–237 (LFAMIGTIFLWVFWPSFNSAP) traverse the membrane as a helical segment. The Extracellular segment spans residues 238 to 247 (TALGDGQHRT). A helical transmembrane segment spans residues 248–270 (VVNTYYSLTASTLSTFALSALVS). Topologically, residues 271 to 274 (GDGR) are cytoplasmic. The helical transmembrane segment at 275-295 (LDMVHIQNAALAGGVVVGTAS) threads the bilayer. Residue Glu296 is a topological domain, extracellular. The helical transmembrane segment at 297-317 (MMLTPFGALAAGFLAGTVSTL) threads the bilayer. Residues 318-340 (GYKFFTPILESRFKLQDTCGVHN) are Cytoplasmic-facing. The helical transmembrane segment at 341 to 361 (LHGMPGLLGAILGVLVAALAT) threads the bilayer. At 362–390 (HEAYGDGLQTVFPLIAKGQRSATSQAMYQ) the chain is on the extracellular side. The helical transmembrane segment at 391 to 411 (LFGMFVTLVFASVGGSLGGLL) threads the bilayer. The Cytoplasmic segment spans residues 412–455 (LKLPFLDSPPDSQCFEDQVYWEVPGEQEAETQRPLRTEEPDTQA). The interaction with ANK3 stretch occupies residues 413–421 (KLPFLDSPP).

It belongs to the ammonium transporter (TC 2.A.49) family. Rh subfamily. In terms of assembly, interacts (via C-terminus) with ANK2 and ANK3; required for targeting to the basolateral membrane. In terms of processing, N-glycosylated. Expressed in kidney by connecting segments and collecting tubules (at protein level).

The protein localises to the basolateral cell membrane. The protein resides in the cytoplasmic vesicle membrane. It catalyses the reaction NH4(+)(in) = NH4(+)(out). The catalysed reaction is methylamine(out) = methylamine(in). It carries out the reaction CO2(out) = CO2(in). In terms of biological role, ammonium transporter involved in the maintenance of acid-base homeostasis. Transports ammonium and its related derivative methylammonium across the basolateral plasma membrane of epithelial cells likely contributing to renal transepithelial ammonia transport and ammonia metabolism. May transport either NH4(+) or NH3 ammonia species predominantly mediating an electrogenic NH4(+) transport. May act as a CO2 channel providing for renal acid secretion. The sequence is that of Ammonium transporter Rh type B (Rhbg) from Rattus norvegicus (Rat).